The sequence spans 118 residues: uncharacterized protein (118 aa).

The interval Ala25–Arg85 is disordered. Residues Arg71–Arg83 show a composition bias toward low complexity.

This is an uncharacterized protein from Azospirillum brasilense.